We begin with the raw amino-acid sequence, 272 residues long: tRNA pseudouridine synthase A (272 aa).

The Nucleophile role is filled by Asp51. Tyr109 is a substrate binding site.

This sequence belongs to the tRNA pseudouridine synthase TruA family. As to quaternary structure, homodimer.

The enzyme catalyses uridine(38/39/40) in tRNA = pseudouridine(38/39/40) in tRNA. Functionally, formation of pseudouridine at positions 38, 39 and 40 in the anticodon stem and loop of transfer RNAs. The sequence is that of tRNA pseudouridine synthase A from Verminephrobacter eiseniae (strain EF01-2).